A 686-amino-acid polypeptide reads, in one-letter code: Alpha-amylase 1 (686 aa).

The active-site Nucleophile is Glu125. Asp216 functions as the Proton donor in the catalytic mechanism.

It belongs to the glycosyl hydrolase 57 family.

It localises to the cytoplasm. The enzyme catalyses Endohydrolysis of (1-&gt;4)-alpha-D-glucosidic linkages in polysaccharides containing three or more (1-&gt;4)-alpha-linked D-glucose units.. This amylase is a highly liquefying-type: oligomers appeared at the beginning of incubation, followed by a graded decrease in the amounts of maltotriose, maltose and glucose in prolonged incubation. This chain is Alpha-amylase 1 (amyA), found in Dictyoglomus thermophilum (strain ATCC 35947 / DSM 3960 / H-6-12).